A 369-amino-acid chain; its full sequence is ATP-dependent 6-phosphofructokinase (369 aa).

Residues G15, 81 to 82 (KG), and 108 to 111 (GDGS) each bind ATP. Residue D109 participates in Mg(2+) binding. Substrate is bound by residues 132-134 (TID), R169, 176-178 (MGR), E230, R266, and 272-275 (HIQR). The Proton acceptor role is filled by D134.

This sequence belongs to the phosphofructokinase type A (PFKA) family. Mixed-substrate PFK group III subfamily. Homodimer or homotetramer. Requires Mg(2+) as cofactor.

Its subcellular location is the cytoplasm. It carries out the reaction beta-D-fructose 6-phosphate + ATP = beta-D-fructose 1,6-bisphosphate + ADP + H(+). Its pathway is carbohydrate degradation; glycolysis; D-glyceraldehyde 3-phosphate and glycerone phosphate from D-glucose: step 3/4. In terms of biological role, catalyzes the phosphorylation of D-fructose 6-phosphate to fructose 1,6-bisphosphate by ATP, the first committing step of glycolysis. This Thermosynechococcus vestitus (strain NIES-2133 / IAM M-273 / BP-1) protein is ATP-dependent 6-phosphofructokinase.